A 208-amino-acid polypeptide reads, in one-letter code: Uracil phosphoribosyltransferase (208 aa).

Residues R78, R103, and 130-138 (DPMLATGVS) contribute to the 5-phospho-alpha-D-ribose 1-diphosphate site. Uracil-binding positions include I193 and 198–200 (GDA). D199 lines the 5-phospho-alpha-D-ribose 1-diphosphate pocket.

The protein belongs to the UPRTase family. Mg(2+) is required as a cofactor.

The catalysed reaction is UMP + diphosphate = 5-phospho-alpha-D-ribose 1-diphosphate + uracil. The protein operates within pyrimidine metabolism; UMP biosynthesis via salvage pathway; UMP from uracil: step 1/1. Its activity is regulated as follows. Allosterically activated by GTP. In terms of biological role, catalyzes the conversion of uracil and 5-phospho-alpha-D-ribose 1-diphosphate (PRPP) to UMP and diphosphate. The sequence is that of Uracil phosphoribosyltransferase from Thermosipho africanus (strain TCF52B).